The chain runs to 217 residues: 3,4-dihydroxy-2-butanone 4-phosphate synthase (217 aa).

Residues 37 to 38, aspartate 42, 150 to 154, and glutamate 174 each bind D-ribulose 5-phosphate; these read RE and RGGHT. A Mg(2+)-binding site is contributed by glutamate 38. Histidine 153 contributes to the Mg(2+) binding site.

Belongs to the DHBP synthase family. In terms of assembly, homodimer. The cofactor is Mg(2+). It depends on Mn(2+) as a cofactor.

The enzyme catalyses D-ribulose 5-phosphate = (2S)-2-hydroxy-3-oxobutyl phosphate + formate + H(+). Its pathway is cofactor biosynthesis; riboflavin biosynthesis; 2-hydroxy-3-oxobutyl phosphate from D-ribulose 5-phosphate: step 1/1. Catalyzes the conversion of D-ribulose 5-phosphate to formate and 3,4-dihydroxy-2-butanone 4-phosphate. This Pectobacterium carotovorum subsp. carotovorum (strain PC1) protein is 3,4-dihydroxy-2-butanone 4-phosphate synthase.